The primary structure comprises 458 residues: UDP-N-acetylmuramate--L-alanine ligase (458 aa).

Residue 115-121 (GSHGKTT) participates in ATP binding.

The protein belongs to the MurCDEF family.

It localises to the cytoplasm. It carries out the reaction UDP-N-acetyl-alpha-D-muramate + L-alanine + ATP = UDP-N-acetyl-alpha-D-muramoyl-L-alanine + ADP + phosphate + H(+). The protein operates within cell wall biogenesis; peptidoglycan biosynthesis. Its function is as follows. Cell wall formation. This Anaeromyxobacter dehalogenans (strain 2CP-C) protein is UDP-N-acetylmuramate--L-alanine ligase.